The sequence spans 174 residues: RNA pyrophosphohydrolase (174 aa).

The Nudix hydrolase domain maps to 6-149; the sequence is GYRPNVGIIL…KRDVYLGALK (144 aa). Positions 38–59 match the Nudix box motif; sequence GGIKPGESPETAMYRELYEEVG.

Belongs to the Nudix hydrolase family. RppH subfamily. A divalent metal cation is required as a cofactor.

In terms of biological role, accelerates the degradation of transcripts by removing pyrophosphate from the 5'-end of triphosphorylated RNA, leading to a more labile monophosphorylated state that can stimulate subsequent ribonuclease cleavage. The protein is RNA pyrophosphohydrolase of Neisseria meningitidis serogroup B (strain ATCC BAA-335 / MC58).